We begin with the raw amino-acid sequence, 319 residues long: ATP-dependent 6-phosphofructokinase (319 aa).

Glycine 11 serves as a coordination point for ATP. An ADP-binding site is contributed by arginine 21 to arginine 25. Residues arginine 72 to phenylalanine 73 and glycine 102 to serine 105 each bind ATP. Position 103 (aspartate 103) interacts with Mg(2+). Position 125 to 127 (serine 125 to aspartate 127) interacts with substrate. Catalysis depends on aspartate 127, which acts as the Proton acceptor. Arginine 154 is an ADP binding site. Residues arginine 162 and methionine 169 to arginine 171 each bind substrate. Residues glycine 185–aspartate 187 and lysine 213–histidine 215 each bind ADP. Substrate-binding positions include glutamate 222, arginine 243, and histidine 249–arginine 252.

The protein belongs to the phosphofructokinase type A (PFKA) family. ATP-dependent PFK group I subfamily. Prokaryotic clade 'B1' sub-subfamily. In terms of assembly, homotetramer. It depends on Mg(2+) as a cofactor.

The protein resides in the cytoplasm. The catalysed reaction is beta-D-fructose 6-phosphate + ATP = beta-D-fructose 1,6-bisphosphate + ADP + H(+). It functions in the pathway carbohydrate degradation; glycolysis; D-glyceraldehyde 3-phosphate and glycerone phosphate from D-glucose: step 3/4. Allosterically activated by ADP and other diphosphonucleosides, and allosterically inhibited by phosphoenolpyruvate. Its function is as follows. Catalyzes the phosphorylation of D-fructose 6-phosphate to fructose 1,6-bisphosphate by ATP, the first committing step of glycolysis. The protein is ATP-dependent 6-phosphofructokinase of Lactobacillus gasseri (strain ATCC 33323 / DSM 20243 / BCRC 14619 / CIP 102991 / JCM 1131 / KCTC 3163 / NCIMB 11718 / NCTC 13722 / AM63).